The chain runs to 155 residues: Lipoprotein signal peptidase (155 aa).

Helical transmembrane passes span 52–72 (ILQG…AGIV) and 85–105 (LGVA…DRVF). Active-site residues include Asp111 and Asp129. A helical transmembrane segment spans residues 124–144 (IFNIADSSLCVGVILLFIQML).

Belongs to the peptidase A8 family.

The protein localises to the cell membrane. The catalysed reaction is Release of signal peptides from bacterial membrane prolipoproteins. Hydrolyzes -Xaa-Yaa-Zaa-|-(S,diacylglyceryl)Cys-, in which Xaa is hydrophobic (preferably Leu), and Yaa (Ala or Ser) and Zaa (Gly or Ala) have small, neutral side chains.. Its pathway is protein modification; lipoprotein biosynthesis (signal peptide cleavage). In terms of biological role, this protein specifically catalyzes the removal of signal peptides from prolipoproteins. The sequence is that of Lipoprotein signal peptidase from Bacillus pumilus (strain SAFR-032).